We begin with the raw amino-acid sequence, 363 residues long: GTPase Obg (363 aa).

The Obg domain occupies 1–159 (MKFLDEAKVY…KTIWLRLKLI (159 aa)). The region spanning 160–327 (ADAGLVGLPN…VLRALRDIIV (168 aa)) is the OBG-type G domain. GTP is bound by residues 166–173 (GLPNAGKS), 191–195 (FTTLH), 212–215 (DIPG), 279–282 (SQID), and 308–310 (SAV). Mg(2+) is bound by residues Ser173 and Thr193. Residues 332–363 (EEKPAKAPKLRHRDMIVSEENNQGEDGADDQP) are disordered. The span at 353 to 363 (NQGEDGADDQP) shows a compositional bias: acidic residues.

This sequence belongs to the TRAFAC class OBG-HflX-like GTPase superfamily. OBG GTPase family. As to quaternary structure, monomer. The cofactor is Mg(2+).

It localises to the cytoplasm. Its function is as follows. An essential GTPase which binds GTP, GDP and possibly (p)ppGpp with moderate affinity, with high nucleotide exchange rates and a fairly low GTP hydrolysis rate. Plays a role in control of the cell cycle, stress response, ribosome biogenesis and in those bacteria that undergo differentiation, in morphogenesis control. This is GTPase Obg from Rhizobium etli (strain ATCC 51251 / DSM 11541 / JCM 21823 / NBRC 15573 / CFN 42).